The following is a 202-amino-acid chain: Small ribosomal subunit protein uS5 (202 aa).

In terms of domain architecture, S5 DRBM spans 46–109 (LKSEVLSVGF…RRAKLNIVPV (64 aa)).

The protein belongs to the universal ribosomal protein uS5 family. Part of the 30S ribosomal subunit. Contacts protein S4.

Its function is as follows. With S4 and S12 plays an important role in translational accuracy. The sequence is that of Small ribosomal subunit protein uS5 from Thermofilum pendens (strain DSM 2475 / Hrk 5).